The following is a 65-amino-acid chain: Large ribosomal subunit protein bL32 (65 aa).

The span at 1 to 19 (MAIVPKRKTSKQRKHKRQS) shows a compositional bias: basic residues. The tract at residues 1–21 (MAIVPKRKTSKQRKHKRQSHS) is disordered.

This sequence belongs to the bacterial ribosomal protein bL32 family.

This Mesomycoplasma hyopneumoniae (strain 7448) (Mycoplasma hyopneumoniae) protein is Large ribosomal subunit protein bL32.